Reading from the N-terminus, the 142-residue chain is Hemoglobin subunit alpha (142 aa).

The Globin domain maps to 2-142 (VLSPADKTNV…VSTVLTSKYR (141 aa)). A Phosphoserine modification is found at Ser4. Lys8 bears the N6-succinyllysine mark. The residue at position 9 (Thr9) is a Phosphothreonine. An N6-succinyllysine modification is found at Lys12. The residue at position 17 (Lys17) is an N6-acetyllysine; alternate. N6-succinyllysine; alternate is present on Lys17. Tyr25 carries the phosphotyrosine modification. Ser36 is modified (phosphoserine). Lys41 carries the post-translational modification N6-succinyllysine. A Phosphoserine modification is found at Ser50. An O2-binding site is contributed by His59. His88 provides a ligand contact to heme b. Residue Ser103 is modified to Phosphoserine. Thr109 is subject to Phosphothreonine. Residues Ser125 and Ser132 each carry the phosphoserine modification. Phosphothreonine is present on residues Thr135 and Thr138. At Ser139 the chain carries Phosphoserine.

Belongs to the globin family. In terms of assembly, heterotetramer of two alpha chains and two beta chains. Red blood cells.

In terms of biological role, involved in oxygen transport from the lung to the various peripheral tissues. Its function is as follows. Hemopressin acts as an antagonist peptide of the cannabinoid receptor CNR1. Hemopressin-binding efficiently blocks cannabinoid receptor CNR1 and subsequent signaling. The protein is Hemoglobin subunit alpha (HBA) of Sapajus apella (Brown-capped capuchin).